We begin with the raw amino-acid sequence, 228 residues long: Protein LIAT1 (228 aa).

The tract at residues 1 to 108 (MAGRGGTGAA…RAEPRDKEEN (108 aa)) is disordered. Over residues 12-24 (YGEEGEEEEEEEA) the composition is skewed to acidic residues. Positions 49-71 (KRKVKKKKKKKKTKGSGKGDADK) are lysine-rich domain. The segment covering 50–63 (RKVKKKKKKKKTKG) has biased composition (basic residues). The span at 90–108 (LNPHKDHGLRAEPRDKEEN) shows a compositional bias: basic and acidic residues. Residues 113-165 (PYSYSINHPCFAEIEDTLSSQINESLRWDGILTDPEAEKERIRIYKLNRRKRY) form an interaction with ATE1 region. The stretch at 169 to 178 (ALKCFHSDPC) is repeat 1.

In terms of assembly, self-associates (via Lys-rich domain); targets LIAT1 to the nucleolus. Interacts with ATE1; it is not a substrate of ATE1, the interaction takes place in the cytoplasm and seems to increase ATE1 arginyltransferase activity. Interacts with JMJD6 and MRPS14. In terms of processing, post-translationally modified by JMJD6 lysyl-hydroxylase activity at its Lys-rich domain, which inhibits its self-association and nucleolar localization. In terms of tissue distribution, highly expressed in spleen, thymus, liver and brown adipose tissue. Moderately expressed in liver, testis and lung.

The protein resides in the nucleus. Its subcellular location is the nucleolus. It localises to the cytoplasm. In terms of biological role, participates in nucleolar liquid-liquid phase separation (LLPS) through its N-terminal intrinsically disordered region (IDR). May be involved in ATE1-mediated N-terminal arginylation. This Mus musculus (Mouse) protein is Protein LIAT1.